The chain runs to 88 residues: Cell division topological specificity factor (88 aa).

It belongs to the MinE family.

Functionally, prevents the cell division inhibition by proteins MinC and MinD at internal division sites while permitting inhibition at polar sites. This ensures cell division at the proper site by restricting the formation of a division septum at the midpoint of the long axis of the cell. In Salmonella agona (strain SL483), this protein is Cell division topological specificity factor.